The following is a 220-amino-acid chain: Elongation factor Ts, chloroplastic (220 aa).

This sequence belongs to the EF-Ts family.

The protein localises to the plastid. The protein resides in the chloroplast. Functionally, associates with the EF-Tu.GDP complex and induces the exchange of GDP to GTP. It remains bound to the aminoacyl-tRNA.EF-Tu.GTP complex up to the GTP hydrolysis stage on the ribosome. The protein is Elongation factor Ts, chloroplastic (tsf) of Porphyra purpurea (Red seaweed).